A 457-amino-acid polypeptide reads, in one-letter code: Probable cytosolic Fe-S cluster assembly factor oxy-4 (457 aa).

Position 25 (C25) interacts with [4Fe-4S] cluster. Residues K38–E59 are disordered. The [4Fe-4S] cluster site is built by C71, C74, C77, C176, C232, C380, and C384.

It belongs to the NARF family.

Its function is as follows. Component of the cytosolic iron-sulfur (Fe/S) protein assembly machinery. Required for maturation of extramitochondrial Fe/S proteins. This Caenorhabditis elegans protein is Probable cytosolic Fe-S cluster assembly factor oxy-4 (oxy-4).